A 57-amino-acid chain; its full sequence is Large ribosomal subunit protein bL32 (57 aa).

The segment covering 1-19 (MAVPKRRMSRSNTRSRRSQ) has biased composition (basic residues). The segment at 1–21 (MAVPKRRMSRSNTRSRRSQWK) is disordered.

Belongs to the bacterial ribosomal protein bL32 family.

This is Large ribosomal subunit protein bL32 from Mycobacteroides abscessus (strain ATCC 19977 / DSM 44196 / CCUG 20993 / CIP 104536 / JCM 13569 / NCTC 13031 / TMC 1543 / L948) (Mycobacterium abscessus).